The following is a 492-amino-acid chain: Tumor necrosis factor receptor superfamily member 8 (492 aa).

The first 18 residues, 1–18 (MSILLKAAGLLFLGMLQA), serve as a signal peptide directing secretion. The Extracellular segment spans residues 19–282 (FPKDRPLDTT…STGTPFLDPG (264 aa)). TNFR-Cys repeat units follow at residues 57 to 104 (PCPQ…PRIC) and 105 to 141 (ECQPGMYCSTPAVNSCARCSEKTVVKFPDTAEKNTIC). Intrachain disulfides connect C58-C80, C83-C96, C86-C104, and C123-C141. The disordered stretch occupies residues 141–178 (CDLPSPGSGPNGSNPDDCKTLTSHTTPQAIPTLESPAN). A compositionally biased stretch (low complexity) spans 144 to 155 (PSPGSGPNGSNP). N-linked (GlcNAc...) asparagine glycans are attached at residues N151, N178, and N224. The segment covering 160 to 178 (TLTSHTTPQAIPTLESPAN) has biased composition (polar residues). Residues 283–303 (SMLFWVAMVVLLVGSASFLLC) traverse the membrane as a helical segment. At 304 to 492 (YWKACRRRFQ…DHEPTTVSEK (189 aa)) the chain is on the cytoplasmic side. A phosphoserine mark is found at S334 and S348. 2 disordered regions span residues 336-366 (PTEKLTQLQRSGSVTDSSAGHTLSPLSPPAV) and 432-492 (PEGR…VSEK). Positions 339 to 360 (KLTQLQRSGSVTDSSAGHTLSP) are enriched in polar residues. Basic and acidic residues-rich tracts occupy residues 450–459 (EVDHTPHYPE) and 478–492 (EGGKEDHEPTTVSEK).

Belongs to the TNFR8 family. As to quaternary structure, interacts with TRAF1, TRAF2, TRAF3 and TRAF5. As to expression, very low level of expression. Detected in spleen, thymus and lung. Highly expressed in HTLV-1 infected T-cell lines.

The protein resides in the cell membrane. In terms of biological role, receptor for TNFSF8/CD30L. May play a role in the regulation of cellular growth and transformation of activated lymphoblasts. Regulates gene expression through activation of NF-kappa-B. The sequence is that of Tumor necrosis factor receptor superfamily member 8 from Rattus norvegicus (Rat).